The primary structure comprises 245 residues: Thiopurine S-methyltransferase (245 aa).

Residue 29-40 (WQEKWVSRRIGF) participates in S-adenosyl-L-methionine binding. Phenylalanine 40 is a substrate binding site. The residue at position 58 (lysine 58) is an N6-acetyllysine. S-adenosyl-L-methionine is bound by residues leucine 69, glutamate 90, and arginine 152.

The protein belongs to the class I-like SAM-binding methyltransferase superfamily. TPMT family. Monomer.

It localises to the cytoplasm. The enzyme catalyses S-adenosyl-L-methionine + a thiopurine = S-adenosyl-L-homocysteine + a thiopurine S-methylether.. The protein is Thiopurine S-methyltransferase (TPMT) of Canis lupus familiaris (Dog).